The sequence spans 76 residues: Sec-independent protein translocase protein TatA (76 aa).

The helical transmembrane segment at 1–21 (MGGLSIWHWLIVLLIVALVFG) threads the bilayer. The interval 43–76 (MKEGEAPADAQQLPRSGSVDVNAKETTRSDSNKA) is disordered. A compositionally biased stretch (basic and acidic residues) spans 64 to 76 (NAKETTRSDSNKA).

The protein belongs to the TatA/E family. In terms of assembly, the Tat system comprises two distinct complexes: a TatABC complex, containing multiple copies of TatA, TatB and TatC subunits, and a separate TatA complex, containing only TatA subunits. Substrates initially bind to the TatABC complex, which probably triggers association of the separate TatA complex to form the active translocon.

It is found in the cell inner membrane. In terms of biological role, part of the twin-arginine translocation (Tat) system that transports large folded proteins containing a characteristic twin-arginine motif in their signal peptide across membranes. TatA could form the protein-conducting channel of the Tat system. The polypeptide is Sec-independent protein translocase protein TatA (Burkholderia lata (strain ATCC 17760 / DSM 23089 / LMG 22485 / NCIMB 9086 / R18194 / 383)).